The chain runs to 86 residues: Protein K3 homolog (86 aa).

The S1 motif domain maps to Asn-15–Val-86.

The protein belongs to the poxviridae K3 protein family. In terms of assembly, interacts with host PKR kinase.

Viral mimic of eIF-2-alpha that acts as a pseudosubstrate for EIF2AK2/PKR kinase. Inhibits therefore eIF-2-alpha phosphorylation by host EIF2AK2/PKR kinase and prevents protein synthesis shutoff. The polypeptide is Protein K3 homolog (Sus scrofa (Pig)).